A 101-amino-acid polypeptide reads, in one-letter code: Secreted RxLR effector protein 64 (101 aa).

Residues 1–23 form the signal peptide; sequence MMSPPMTTTLMFILNYAIISFHG. The short motif at 48–51 is the RxLR element; sequence RELR. The helical transmembrane segment at 67–87 threads the bilayer; that stretch reads LQPILPLPLCLPFPLVPASIF.

Belongs to the RxLR effector family.

It is found in the secreted. The protein resides in the host cytoplasm. Its subcellular location is the host nucleus. The protein localises to the membrane. In terms of biological role, effector that acts as a broad suppressor of cell death to interrupt plant immunity. Inhibits cell death induced by cell death-inducing proteins, including the PAMP elicitor INF1 from P.infestans. This chain is Secreted RxLR effector protein 64, found in Plasmopara viticola (Downy mildew of grapevine).